The sequence spans 247 residues: ATP synthase subunit a, chloroplastic (247 aa).

5 helical membrane-spanning segments follow: residues 38 to 58 (QVLITSWVVIAILLGSATVAV), 95 to 115 (VPFIGTMFLFIFVSNWSGALL), 134 to 154 (INTTVALALPTSVAYFYAGLT), 199 to 219 (LVVVVLVSLVPSVVPIPVMFL), and 220 to 240 (GLFTSGIQALIFATLAAAYIG).

The protein belongs to the ATPase A chain family. F-type ATPases have 2 components, CF(1) - the catalytic core - and CF(0) - the membrane proton channel. CF(1) has five subunits: alpha(3), beta(3), gamma(1), delta(1), epsilon(1). CF(0) has four main subunits: a, b, b' and c.

Its subcellular location is the plastid. It localises to the chloroplast thylakoid membrane. In terms of biological role, key component of the proton channel; it plays a direct role in the translocation of protons across the membrane. The sequence is that of ATP synthase subunit a, chloroplastic from Platanus occidentalis (Sycamore).